We begin with the raw amino-acid sequence, 84 residues long: UPF0473 protein CKL_1327 (84 aa).

It belongs to the UPF0473 family.

This is UPF0473 protein CKL_1327 from Clostridium kluyveri (strain ATCC 8527 / DSM 555 / NBRC 12016 / NCIMB 10680 / K1).